The chain runs to 298 residues: ADP-ribosyl cyclase/cyclic ADP-ribose hydrolase 1 (298 aa).

Residues 1-21 (MPDYEFSPASGDRPRSWISKQ) lie on the Cytoplasmic side of the membrane. A helical; Signal-anchor for type II membrane protein transmembrane segment spans residues 22-42 (VLIVLGVCLPVILALAIWVGV). At 43–298 (LTWRQSSMGA…PEHPSCSVLM (256 aa)) the chain is on the extracellular side. Cystine bridges form between cysteine 64–cysteine 80, cysteine 97–cysteine 178, and cysteine 158–cysteine 171. An N-linked (GlcNAc...) asparagine glycan is attached at asparagine 98. Cysteine 117 is an active-site residue. Residue asparagine 118 is glycosylated (N-linked (GlcNAc...) asparagine). An N-linked (GlcNAc...) asparagine glycan is attached at asparagine 177. The active site involves cysteine 199. N-linked (GlcNAc...) asparagine glycans are attached at residues asparagine 207 and asparagine 268. 2 disulfides stabilise this stretch: cysteine 252/cysteine 273 and cysteine 285/cysteine 294.

The protein belongs to the ADP-ribosyl cyclase family. As to quaternary structure, homodimer. As to expression, osteoclasts.

The protein localises to the cell membrane. Its subcellular location is the microsome membrane. It is found in the endoplasmic reticulum membrane. It carries out the reaction NAD(+) = cyclic ADP-beta-D-ribose + nicotinamide + H(+). The catalysed reaction is 2'-phospho-cyclic ADP-ribose + nicotinate = nicotinate-adenine dinucleotide phosphate. The enzyme catalyses NAD(+) + H2O = ADP-D-ribose + nicotinamide + H(+). It catalyses the reaction nicotinate + NADP(+) = nicotinate-adenine dinucleotide phosphate + nicotinamide. Functionally, synthesizes cyclic ADP-ribose (cADPR), a second messenger for glucose-induced insulin secretion. Synthesizes the Ca(2+) mobilizer nicotinate-adenine dinucleotide phosphate, NAADP(+), from 2'-phospho-cADPR and nicotinic acid, as well as from NADP(+) and nicotinic acid. Also has cADPR hydrolase activity. This chain is ADP-ribosyl cyclase/cyclic ADP-ribose hydrolase 1 (CD38), found in Oryctolagus cuniculus (Rabbit).